Consider the following 1463-residue polypeptide: DNA-directed RNA polymerase subunit beta'' (1463 aa).

Zn(2+)-binding residues include Cys239, Cys312, Cys319, and Cys322. Disordered stretches follow at residues 836–869 (TFTGEEKQEGNKPVEITSKNRRKSAANSSHETRM) and 987–1007 (TNRSKTRRNASGKTQVKAQAR). Over residues 860 to 869 (AANSSHETRM) the composition is skewed to polar residues. Over residues 987-996 (TNRSKTRRNA) the composition is skewed to basic residues. The span at 997 to 1007 (SGKTQVKAQAR) shows a compositional bias: polar residues.

This sequence belongs to the RNA polymerase beta' chain family. RpoC2 subfamily. In plastids the minimal PEP RNA polymerase catalytic core is composed of four subunits: alpha, beta, beta', and beta''. When a (nuclear-encoded) sigma factor is associated with the core the holoenzyme is formed, which can initiate transcription. Zn(2+) is required as a cofactor.

The protein resides in the plastid. It localises to the chloroplast. It catalyses the reaction RNA(n) + a ribonucleoside 5'-triphosphate = RNA(n+1) + diphosphate. DNA-dependent RNA polymerase catalyzes the transcription of DNA into RNA using the four ribonucleoside triphosphates as substrates. The chain is DNA-directed RNA polymerase subunit beta'' from Nephroselmis olivacea (Green alga).